Here is a 100-residue protein sequence, read N- to C-terminus: Elicitin Vex2 (100 aa).

3 cysteine pairs are disulfide-bonded: Cys-3–Cys-71, Cys-27–Cys-56, and Cys-51–Cys-95.

The protein belongs to the elicitin family.

Its subcellular location is the secreted. Its function is as follows. Induces local and distal defense responses (incompatible hypersensitive reaction) in plants from the solanaceae and cruciferae families. Elicits leaf necrosis and causes the accumulation of pathogenesis-related proteins. Might interact with the lipidic molecules of the plasma membrane. The polypeptide is Elicitin Vex2 (Phytopythium vexans (Damping-off fungus)).